The sequence spans 526 residues: Bifunctional purine biosynthesis protein PurH (526 aa).

The MGS-like domain maps to Met-1–Thr-145.

The protein belongs to the PurH family.

It catalyses the reaction (6R)-10-formyltetrahydrofolate + 5-amino-1-(5-phospho-beta-D-ribosyl)imidazole-4-carboxamide = 5-formamido-1-(5-phospho-D-ribosyl)imidazole-4-carboxamide + (6S)-5,6,7,8-tetrahydrofolate. The catalysed reaction is IMP + H2O = 5-formamido-1-(5-phospho-D-ribosyl)imidazole-4-carboxamide. It functions in the pathway purine metabolism; IMP biosynthesis via de novo pathway; 5-formamido-1-(5-phospho-D-ribosyl)imidazole-4-carboxamide from 5-amino-1-(5-phospho-D-ribosyl)imidazole-4-carboxamide (10-formyl THF route): step 1/1. Its pathway is purine metabolism; IMP biosynthesis via de novo pathway; IMP from 5-formamido-1-(5-phospho-D-ribosyl)imidazole-4-carboxamide: step 1/1. The sequence is that of Bifunctional purine biosynthesis protein PurH from Psychrobacter arcticus (strain DSM 17307 / VKM B-2377 / 273-4).